The primary structure comprises 736 residues: Alpha-xylosidase A (736 aa).

Positions 1–18 are cleaved as a signal peptide; that stretch reads MYFSSFLALGALVQAAAA. N-linked (GlcNAc...) asparagine glycosylation is found at N24, N279, N332, and N376. The active site involves D413. N471 carries an N-linked (GlcNAc...) asparagine glycan. D505 serves as the catalytic Proton donor. Residues N655, N676, N690, and N701 are each glycosylated (N-linked (GlcNAc...) asparagine).

The protein belongs to the glycosyl hydrolase 31 family.

The protein localises to the secreted. The catalysed reaction is Hydrolysis of terminal, non-reducing alpha-D-xylose residues with release of alpha-D-xylose.. Functionally, catalyzes the liberation of alpha-xylose from the non-reducing terminal glucose of xyloglucan oligosaccharides. The polypeptide is Alpha-xylosidase A (Aspergillus niger (strain ATCC MYA-4892 / CBS 513.88 / FGSC A1513)).